A 436-amino-acid polypeptide reads, in one-letter code: MSNRKTKGNSAVHPECLSQVQRILRERFCHQSPHSNLFGVQVQYKHLIELLKRTAINGESNSVLIVGPRGSGKTMLINHALKELMEIREVSENVLQVHLNGLMQINDKIALTEITRQLNLENVVGDKVFGSFAENLSFLLEALKKGNRANSCPVIFILDEFDLFAHQKNQTLLYNLFDISQSAQTPVAVIGLTCRLDILELLEKRVKSRFSHRQIHLMNSFDFPQYMKIFKEQLSLPEEFPNKVFAERWNENTQSLSEDSTVREVLQKLFNVNKSLRSLHMLLMLALNRVTVSHPFMTSADLMEAQHLCSLDSKASIIHGLSVLEICLIIAMKHLNDIYEEEPFNFQMVYNEFQKFIQRKAHSVYNFEKPVVMKAFEHLQQLELIKPMERTSVNSQREYQLVKLLLDNTQIMNALQKYSNCPTDVRQWATSSLSWL.

K7 carries the N6-methyllysine modification. Residue 67–74 (GPRGSGKT) participates in ATP binding.

It belongs to the ORC4 family. As to quaternary structure, component of ORC, a complex composed of at least 6 subunits: ORC1, ORC2, ORC3, ORC4, ORC5 and ORC6. ORC is regulated in a cell-cycle dependent manner. It is sequentially assembled at the exit from anaphase of mitosis and disassembled as cells enter S phase. Interacts with DBF4. Interacts with POLQ.

Its subcellular location is the nucleus. In terms of biological role, component of the origin recognition complex (ORC) that binds origins of replication. DNA-binding is ATP-dependent. The specific DNA sequences that define origins of replication have not been identified yet. ORC is required to assemble the pre-replication complex necessary to initiate DNA replication. Binds histone H3 and H4 trimethylation marks H3K9me3, H3K27me3 and H4K20me3. The sequence is that of Origin recognition complex subunit 4 (ORC4) from Cricetulus griseus (Chinese hamster).